Here is a 63-residue protein sequence, read N- to C-terminus: Conotoxin p5a (63 aa).

Residues 1 to 19 (MRCLPVFVILLLLIPSAPC) form the signal peptide. Positions 20 to 50 (VDAHPKTKDDMPLASFHDNAKGTLQRFWKKR) are excised as a propeptide. Cystine bridges form between C52-C59 and C53-C60. The residue at position 62 (L62) is a Leucine amide.

In terms of tissue distribution, expressed by the venom duct.

It localises to the secreted. Its function is as follows. In vivo, low levels of the peptide injected into male specimens of the Siamese fighting fish causes an immediate aggressive display in this fish in response to their reflection when placed in a mirrored aquarium; High levels of the peptide suppressed this behavior. No effect is observed when injected into mice. This is Conotoxin p5a from Conus purpurascens (Purple cone).